Consider the following 369-residue polypeptide: 3-dehydroquinate synthase (369 aa).

NAD(+) contacts are provided by residues 80–85 (DGEQYK), 114–118 (GVIGD), 138–139 (TT), Lys151, Lys160, and 178–181 (TLKT). Residues Glu193, His256, and His273 each coordinate Zn(2+).

Belongs to the sugar phosphate cyclases superfamily. Dehydroquinate synthase family. It depends on Co(2+) as a cofactor. Requires Zn(2+) as cofactor. NAD(+) serves as cofactor.

The protein localises to the cytoplasm. It carries out the reaction 7-phospho-2-dehydro-3-deoxy-D-arabino-heptonate = 3-dehydroquinate + phosphate. It participates in metabolic intermediate biosynthesis; chorismate biosynthesis; chorismate from D-erythrose 4-phosphate and phosphoenolpyruvate: step 2/7. In terms of biological role, catalyzes the conversion of 3-deoxy-D-arabino-heptulosonate 7-phosphate (DAHP) to dehydroquinate (DHQ). This is 3-dehydroquinate synthase from Psychrobacter cryohalolentis (strain ATCC BAA-1226 / DSM 17306 / VKM B-2378 / K5).